The sequence spans 378 residues: Protein RecA (378 aa).

79-86 lines the ATP pocket; it reads GPESSGKT.

This sequence belongs to the RecA family.

Its subcellular location is the cytoplasm. Can catalyze the hydrolysis of ATP in the presence of single-stranded DNA, the ATP-dependent uptake of single-stranded DNA by duplex DNA, and the ATP-dependent hybridization of homologous single-stranded DNAs. It interacts with LexA causing its activation and leading to its autocatalytic cleavage. The chain is Protein RecA from Streptococcus pyogenes serotype M1.